The chain runs to 525 residues: DNA polymerase epsilon subunit 2 (525 aa).

The protein belongs to the DNA polymerase epsilon subunit B family. Component of the epsilon DNA polymerase complex consisting of four subunits: the catalytic subunit PolE1/DNApol-epsilon255 and the accessory subunits PolE2/DNApol-epsilon58, Chrac-14/DNApolE3 and PolE4.

It localises to the nucleus. Functionally, accessory component of the DNA polymerase epsilon complex. Participates in DNA repair and in chromosomal DNA replication. Has a role in the entrance and progression through S phase. Has a role in endoreplication. Essential for viability and tissue development. This chain is DNA polymerase epsilon subunit 2, found in Drosophila melanogaster (Fruit fly).